The following is a 506-amino-acid chain: UDP-N-acetylmuramoylalanine--D-glutamate ligase (506 aa).

Residue 128–134 (GTNGKTT) participates in ATP binding.

Belongs to the MurCDEF family.

It is found in the cytoplasm. The catalysed reaction is UDP-N-acetyl-alpha-D-muramoyl-L-alanine + D-glutamate + ATP = UDP-N-acetyl-alpha-D-muramoyl-L-alanyl-D-glutamate + ADP + phosphate + H(+). It participates in cell wall biogenesis; peptidoglycan biosynthesis. In terms of biological role, cell wall formation. Catalyzes the addition of glutamate to the nucleotide precursor UDP-N-acetylmuramoyl-L-alanine (UMA). This chain is UDP-N-acetylmuramoylalanine--D-glutamate ligase, found in Albidiferax ferrireducens (strain ATCC BAA-621 / DSM 15236 / T118) (Rhodoferax ferrireducens).